Here is a 506-residue protein sequence, read N- to C-terminus: Histidine ammonia-lyase (506 aa).

A cross-link (5-imidazolinone (Ala-Gly)) is located at residues 143–145; sequence ASG. Position 144 is a 2,3-didehydroalanine (Ser) (Ser144).

The protein belongs to the PAL/histidase family. Contains an active site 4-methylidene-imidazol-5-one (MIO), which is formed autocatalytically by cyclization and dehydration of residues Ala-Ser-Gly.

The protein localises to the cytoplasm. The enzyme catalyses L-histidine = trans-urocanate + NH4(+). Its pathway is amino-acid degradation; L-histidine degradation into L-glutamate; N-formimidoyl-L-glutamate from L-histidine: step 1/3. This chain is Histidine ammonia-lyase, found in Salmonella schwarzengrund (strain CVM19633).